Reading from the N-terminus, the 57-residue chain is uncharacterized protein (57 aa).

Helical transmembrane passes span 4–26 and 33–55; these read VNILSYFAFSVEAVLFPMSSELW and ALGYGVEKICLYSFVLVLPIAIL.

The protein resides in the cell membrane. This is an uncharacterized protein from Methanocaldococcus jannaschii (strain ATCC 43067 / DSM 2661 / JAL-1 / JCM 10045 / NBRC 100440) (Methanococcus jannaschii).